The chain runs to 77 residues: Protein UL148C (77 aa).

2 helical membrane passes run 10–30 (VLYL…AVAV) and 35–55 (IAWA…VGAA).

The protein resides in the host membrane. In Homo sapiens (Human), this protein is Protein UL148C (UL148C).